We begin with the raw amino-acid sequence, 514 residues long: uncharacterized protein (514 aa).

Disordered regions lie at residues 1 to 68 (MSSP…SESE), 109 to 244 (VPPP…RQAS), and 272 to 484 (RPAV…AQGC). Basic residues predominate over residues 368 to 384 (KPQKPKHSSPGKKPAGR). Over residues 385 to 405 (KTRESQAAAREDNDPNRDEVP) the composition is skewed to basic and acidic residues.

This is an uncharacterized protein from Homo sapiens (Human).